The primary structure comprises 1138 residues: 2'-5'-oligoadenylate synthase 3 (1138 aa).

Met1 carries the N-acetylmethionine modification. Residues 6-341 (TPAGALDKLV…GVLVQPWEGP (336 aa)) form an OAS domain 1 region. 2 interaction with dsRNA regions span residues 12–56 (DKLV…VIRI) and 185–199 (EPRK…AKLK). Positions 342–462 (GLPRAGILDL…GSRMSPDLSQ (121 aa)) are linker. Over residues 370–379 (LAVQSKERSQ) the composition is skewed to basic and acidic residues. Disordered regions lie at residues 370-403 (LAVQ…NPSA) and 434-459 (TQST…MSPD). Over residues 447 to 459 (SSISTAGSRMSPD) the composition is skewed to polar residues. OAS domain stretches follow at residues 463 to 793 (IPSK…PWDV) and 801 to 1135 (TLAE…WPVK). Ser855 lines the ATP pocket. Residues Asp867, Asp869, and Asp939 each contribute to the Mg(2+) site. 3 residues coordinate ATP: Arg998, Lys1001, and Gln1020.

The protein belongs to the 2-5A synthase family. In terms of assembly, monomer. Requires Mg(2+) as cofactor. In terms of tissue distribution, intestine.

The protein resides in the cytoplasm. The protein localises to the nucleus. It carries out the reaction 3 ATP = 5'-triphosphoadenylyl-(2'-&gt;5')-adenylyl-(2'-&gt;5')-adenosine + 2 diphosphate. With respect to regulation, produced as a latent enzyme which is activated by dsRNA generated during the course of viral infection. Strongly activated by long dsRNAs at least 50 nucleotides in length. ssRNA does not activate the enzyme. In terms of biological role, interferon-induced, dsRNA-activated antiviral enzyme which plays a critical role in cellular innate antiviral response. In addition, it may also play a role in other cellular processes such as apoptosis, cell growth, differentiation and gene regulation. Synthesizes preferentially dimers of 2'-5'-oligoadenylates (2-5A) from ATP which then bind to the inactive monomeric form of ribonuclease L (RNase L) leading to its dimerization and subsequent activation. Activation of RNase L leads to degradation of cellular as well as viral RNA, resulting in the inhibition of protein synthesis, thus terminating viral replication. Can mediate the antiviral effect via the classical RNase L-dependent pathway or an alternative antiviral pathway independent of RNase L. This Mus musculus (Mouse) protein is 2'-5'-oligoadenylate synthase 3 (Oas3).